A 1145-amino-acid polypeptide reads, in one-letter code: Trafficking protein particle complex subunit 10 (1145 aa).

The protein belongs to the TMEM1 family. As to quaternary structure, part of the multisubunit TRAPP (transport protein particle) complex. Interacts with Shal (via C-terminal dendritic targeting motif). As to expression, co-expressed with Shal in the nervous system.

It is found in the golgi apparatus. The protein resides in the cis-Golgi network. The protein localises to the cell projection. Its subcellular location is the dendrite. It localises to the perikaryon. Its function is as follows. May play a role in vesicular transport from endoplasmic reticulum to Golgi. Has a role in one of the several mechanisms underlying dendritic localization of Shal channels. This chain is Trafficking protein particle complex subunit 10 (SIDL), found in Drosophila melanogaster (Fruit fly).